A 110-amino-acid chain; its full sequence is Phosphoribosyl-AMP cyclohydrolase (110 aa).

Asp-80 is a Mg(2+) binding site. Residue Cys-81 participates in Zn(2+) binding. Residues Asp-82 and Asp-84 each coordinate Mg(2+). The Zn(2+) site is built by Cys-97 and Cys-104.

The protein belongs to the PRA-CH family. In terms of assembly, homodimer. It depends on Mg(2+) as a cofactor. The cofactor is Zn(2+).

The protein resides in the cytoplasm. It catalyses the reaction 1-(5-phospho-beta-D-ribosyl)-5'-AMP + H2O = 1-(5-phospho-beta-D-ribosyl)-5-[(5-phospho-beta-D-ribosylamino)methylideneamino]imidazole-4-carboxamide. It participates in amino-acid biosynthesis; L-histidine biosynthesis; L-histidine from 5-phospho-alpha-D-ribose 1-diphosphate: step 3/9. Catalyzes the hydrolysis of the adenine ring of phosphoribosyl-AMP. This chain is Phosphoribosyl-AMP cyclohydrolase, found in Clostridium botulinum (strain Okra / Type B1).